The sequence spans 371 residues: Peptidyl-prolyl cis-trans isomerase CPR6 (371 aa).

Residues 7–174 form the PPIase cyclophilin-type domain; the sequence is FFDISIGGKP…RDVKIDDCGV (168 aa). TPR repeat units lie at residues 219–252, 270–303, and 308–341; these read IETVKNIGTEQFKKQNYSVALEKYVKCDKFLKEY, VSIPLNIAICALKLKDYKQVLVASSEVLYAEAAD, and AKALYRRGLAYYHVNDTDMALNDLEMATTFQPND.

The protein belongs to the cyclophilin-type PPIase family. PPIase D subfamily. Interacts with RPD3.

It is found in the cytoplasm. It carries out the reaction [protein]-peptidylproline (omega=180) = [protein]-peptidylproline (omega=0). In terms of biological role, PPIases accelerate the folding of proteins. It catalyzes the cis-trans isomerization of proline imidic peptide bonds in oligopeptides. In Saccharomyces cerevisiae (strain ATCC 204508 / S288c) (Baker's yeast), this protein is Peptidyl-prolyl cis-trans isomerase CPR6 (CPR6).